Consider the following 597-residue polypeptide: uncharacterized protein (597 aa).

A run of 2 helical transmembrane segments spans residues 4-23 (LLLA…FKIV) and 209-231 (FVSV…GIAI).

It is found in the cell membrane. This is an uncharacterized protein from Archaeoglobus fulgidus (strain ATCC 49558 / DSM 4304 / JCM 9628 / NBRC 100126 / VC-16).